We begin with the raw amino-acid sequence, 602 residues long: Elongation factor 4 (602 aa).

Positions 6-188 (DRIRNFCIIA…RIVRDVPPPG (183 aa)) constitute a tr-type G domain. Residues 18 to 23 (DHGKST) and 135 to 138 (NKID) contribute to the GTP site.

It belongs to the TRAFAC class translation factor GTPase superfamily. Classic translation factor GTPase family. LepA subfamily.

It is found in the cell membrane. The enzyme catalyses GTP + H2O = GDP + phosphate + H(+). Its function is as follows. Required for accurate and efficient protein synthesis under certain stress conditions. May act as a fidelity factor of the translation reaction, by catalyzing a one-codon backward translocation of tRNAs on improperly translocated ribosomes. Back-translocation proceeds from a post-translocation (POST) complex to a pre-translocation (PRE) complex, thus giving elongation factor G a second chance to translocate the tRNAs correctly. Binds to ribosomes in a GTP-dependent manner. In Desulforudis audaxviator (strain MP104C), this protein is Elongation factor 4.